A 116-amino-acid chain; its full sequence is Biogenesis of lysosome-related organelles complex 1 subunit CNL1 (116 aa).

A coiled-coil region spans residues 63–95; that stretch reads DIVDVNIQSFKDILSKCEELENYFTMLDQIEMI.

It belongs to the BLOC1S4 family. As to quaternary structure, component of the biogenesis of lysosome-related organelles complex-1 (BLOC-1).

It localises to the cytoplasm. Component of the biogenesis of lysosome-related organelles complex-1 (BLOC-1), a complex that is involved in endosomal cargo sorting. The sequence is that of Biogenesis of lysosome-related organelles complex 1 subunit CNL1 (CLN1) from Vanderwaltozyma polyspora (strain ATCC 22028 / DSM 70294 / BCRC 21397 / CBS 2163 / NBRC 10782 / NRRL Y-8283 / UCD 57-17) (Kluyveromyces polysporus).